A 101-amino-acid polypeptide reads, in one-letter code: Small ribosomal subunit protein uS14 (101 aa).

This sequence belongs to the universal ribosomal protein uS14 family. As to quaternary structure, part of the 30S ribosomal subunit. Contacts proteins S3 and S10.

Its function is as follows. Binds 16S rRNA, required for the assembly of 30S particles and may also be responsible for determining the conformation of the 16S rRNA at the A site. In Francisella tularensis subsp. tularensis (strain FSC 198), this protein is Small ribosomal subunit protein uS14.